The chain runs to 588 residues: NADP-dependent malic enzyme 3 (588 aa).

At glycine 2 the chain carries N-acetylglycine. Tyrosine 136 functions as the Proton donor in the catalytic mechanism. Position 189 (arginine 189) interacts with NADP(+). Lysine 207 (proton acceptor) is an active-site residue. Residues glutamate 279, aspartate 280, and aspartate 303 each coordinate a divalent metal cation. NADP(+)-binding positions include aspartate 303, 332–348, and asparagine 444; that span reads LFLG…ELIA.

The protein belongs to the malic enzymes family. As to quaternary structure, homohexamers and homooctamers. It depends on Mg(2+) as a cofactor. Requires Mn(2+) as cofactor. As to expression, mostly expressed in flowers, and, to a lower extent, in stems. In leaves and stems, restricted to the trichomes and trichome basal cells. Also present in the stipules flanking the base of the inflorescence bract leaves and in the meristematic zone of developing lateral roots. In flowers, present in pollen and the abscission zone of developing siliques.

Its subcellular location is the cytoplasm. It carries out the reaction (S)-malate + NADP(+) = pyruvate + CO2 + NADPH. The catalysed reaction is oxaloacetate + H(+) = pyruvate + CO2. With respect to regulation, slightly activated by succinate and aspartate. Repressed by fumarate, malate, oxaloacetate and glucose. In Arabidopsis thaliana (Mouse-ear cress), this protein is NADP-dependent malic enzyme 3 (NADP-ME3).